The following is a 355-amino-acid chain: Trans-3-hydroxy-L-proline dehydratase (355 aa).

Cys111 serves as the catalytic Proton acceptor. Substrate contacts are provided by residues 112–113 (GH) and 276–277 (GS).

It belongs to the proline racemase family. As to quaternary structure, homodimer.

The catalysed reaction is trans-3-hydroxy-L-proline = 1-pyrroline-2-carboxylate + H2O. Catalyzes the dehydration of trans-3-hydroxy-L-proline (t3LHyp) to Delta(1)-pyrroline-2-carboxylate (Pyr2C). Together with LhpI, is involved in a metabolic pathway that converts t3LHyp to L-proline. The sequence is that of Trans-3-hydroxy-L-proline dehydratase from Colwellia psychrerythraea (strain 34H / ATCC BAA-681) (Vibrio psychroerythus).